The primary structure comprises 241 residues: DnaJ homolog subfamily C member 4 (241 aa).

Residues Thr-34 to Leu-99 form the J domain. The segment covering Arg-88 to Leu-99 has biased composition (basic and acidic residues). The tract at residues Arg-88 to Ala-129 is disordered. Residues Gln-119–Ala-129 show a composition bias toward polar residues. A helical transmembrane segment spans residues Val-156 to Phe-175. A disordered region spans residues Gln-212–Pro-241.

The protein resides in the membrane. The protein is DnaJ homolog subfamily C member 4 (DNAJC4) of Homo sapiens (Human).